The chain runs to 608 residues: AAA ATPase forming ring-shaped complexes (608 aa).

A coiled-coil region spans residues 45-79 (AQEYDAVLRRLSAAEATRDNMSRQIRGAGEKNRKL). 302–307 (GNGKTM) is an ATP binding site.

The protein belongs to the AAA ATPase family. In terms of assembly, homohexamer. Assembles into a hexameric ring structure.

The polypeptide is AAA ATPase forming ring-shaped complexes (Rothia mucilaginosa (strain DY-18) (Stomatococcus mucilaginosus)).